The primary structure comprises 245 residues: Probable phosphatase Teth514_1060 (245 aa).

Zn(2+) is bound by residues His-8, His-10, His-16, His-41, Glu-74, His-102, His-133, Asp-194, and His-196.

The protein belongs to the PHP family. Zn(2+) is required as a cofactor.

The sequence is that of Probable phosphatase Teth514_1060 from Thermoanaerobacter sp. (strain X514).